We begin with the raw amino-acid sequence, 332 residues long: Glycerol-3-phosphate dehydrogenase [NAD(P)+] (332 aa).

NADPH is bound by residues Trp11, Arg30, and Lys108. Sn-glycerol 3-phosphate is bound by residues Lys108, Gly137, and Ser139. An NADPH-binding site is contributed by Ala141. Positions 192, 245, 255, 256, and 257 each coordinate sn-glycerol 3-phosphate. Lys192 acts as the Proton acceptor in catalysis. Arg256 provides a ligand contact to NADPH. Residues Val280 and Glu282 each coordinate NADPH.

Belongs to the NAD-dependent glycerol-3-phosphate dehydrogenase family.

It localises to the cytoplasm. The enzyme catalyses sn-glycerol 3-phosphate + NAD(+) = dihydroxyacetone phosphate + NADH + H(+). It catalyses the reaction sn-glycerol 3-phosphate + NADP(+) = dihydroxyacetone phosphate + NADPH + H(+). The protein operates within membrane lipid metabolism; glycerophospholipid metabolism. Functionally, catalyzes the reduction of the glycolytic intermediate dihydroxyacetone phosphate (DHAP) to sn-glycerol 3-phosphate (G3P), the key precursor for phospholipid synthesis. This Burkholderia orbicola (strain MC0-3) protein is Glycerol-3-phosphate dehydrogenase [NAD(P)+].